The following is a 233-amino-acid chain: Superoxide dismutase [Mn] 3.4, mitochondrial (233 aa).

The N-terminal 29 residues, 1–29, are a transit peptide targeting the mitochondrion; sequence MALRTLASKNALSFALGGAARPSAASARG. Mn(2+) contacts are provided by histidine 57, histidine 105, aspartate 194, and histidine 198.

This sequence belongs to the iron/manganese superoxide dismutase family. In terms of assembly, homotetramer. It depends on Mn(2+) as a cofactor.

Its subcellular location is the mitochondrion matrix. The catalysed reaction is 2 superoxide + 2 H(+) = H2O2 + O2. In terms of biological role, destroys superoxide anion radicals which are normally produced within the cells and which are toxic to biological systems. This chain is Superoxide dismutase [Mn] 3.4, mitochondrial (SODA.3), found in Zea mays (Maize).